The following is an 803-amino-acid chain: PR domain zinc finger protein 4 (803 aa).

An SET domain is found at 408–532 (KQLVLRQSIV…PESELLFYYS (125 aa)). 5 consecutive C2H2-type zinc fingers follow at residues 593–615 (WKCS…FMGH), 621–643 (HKCD…LKIH), 649–671 (YRCT…MVIH), 677–699 (LKCD…VLIH), and 705–727 (IKCP…LNSH). The C2H2-type 6; degenerate zinc finger occupies 733–755 (YVCEKCTKAYLTKYHLTRHLKTC). Residues 757–803 (EPSSSSSAQEEEDDESEEEDLADSMRTEDCRMGSAVYSTDESLSAHK) form a disordered region. A compositionally biased stretch (acidic residues) spans 765-778 (QEEEDDESEEEDLA). A compositionally biased stretch (polar residues) spans 792-803 (VYSTDESLSAHK).

Belongs to the class V-like SAM-binding methyltransferase superfamily.

Its subcellular location is the nucleus. Its function is as follows. May function as a transcription factor involved in cell differentiation. In Mus musculus (Mouse), this protein is PR domain zinc finger protein 4 (Prdm4).